Here is a 353-residue protein sequence, read N- to C-terminus: 3-isopropylmalate dehydrogenase (353 aa).

Arg97, Arg107, Arg135, and Asp219 together coordinate substrate. Residues Asp219, Asp243, and Asp247 each coordinate Mg(2+).

The protein belongs to the isocitrate and isopropylmalate dehydrogenases family. LeuB type 1 subfamily. Homodimer. Requires Mg(2+) as cofactor. Mn(2+) serves as cofactor.

It localises to the cytoplasm. The enzyme catalyses (2R,3S)-3-isopropylmalate + NAD(+) = 4-methyl-2-oxopentanoate + CO2 + NADH. The protein operates within amino-acid biosynthesis; L-leucine biosynthesis; L-leucine from 3-methyl-2-oxobutanoate: step 3/4. Functionally, catalyzes the oxidation of 3-carboxy-2-hydroxy-4-methylpentanoate (3-isopropylmalate) to 3-carboxy-4-methyl-2-oxopentanoate. The product decarboxylates to 4-methyl-2 oxopentanoate. The protein is 3-isopropylmalate dehydrogenase of Bacteroides fragilis (strain ATCC 25285 / DSM 2151 / CCUG 4856 / JCM 11019 / LMG 10263 / NCTC 9343 / Onslow / VPI 2553 / EN-2).